The primary structure comprises 38 residues: MTQSNPNEQDVELNRTSLYWGLLLIFVLAVLFSNYFFN.

The chain crosses the membrane as a helical span at residues 17 to 37 (SLYWGLLLIFVLAVLFSNYFF).

The protein belongs to the PsbL family. As to quaternary structure, PSII is composed of 1 copy each of membrane proteins PsbA, PsbB, PsbC, PsbD, PsbE, PsbF, PsbH, PsbI, PsbJ, PsbK, PsbL, PsbM, PsbT, PsbX, PsbY, PsbZ, Psb30/Ycf12, at least 3 peripheral proteins of the oxygen-evolving complex and a large number of cofactors. It forms dimeric complexes.

The protein localises to the plastid. It localises to the chloroplast thylakoid membrane. Its function is as follows. One of the components of the core complex of photosystem II (PSII). PSII is a light-driven water:plastoquinone oxidoreductase that uses light energy to abstract electrons from H(2)O, generating O(2) and a proton gradient subsequently used for ATP formation. It consists of a core antenna complex that captures photons, and an electron transfer chain that converts photonic excitation into a charge separation. This subunit is found at the monomer-monomer interface and is required for correct PSII assembly and/or dimerization. In Oenothera argillicola (Appalachian evening primrose), this protein is Photosystem II reaction center protein L.